Reading from the N-terminus, the 279-residue chain is Large ribosomal subunit protein uL2 (279 aa).

The segment at 223–279 (TVRGSAMNPNDHPHGGGEGRSPVGMDAPRTPWGKRHMGVKTRNNKKSSTSMIVRRRK) is disordered. Residues 254 to 267 (WGKRHMGVKTRNNK) are compositionally biased toward basic residues.

This sequence belongs to the universal ribosomal protein uL2 family. In terms of assembly, part of the 50S ribosomal subunit. Forms a bridge to the 30S subunit in the 70S ribosome.

Its function is as follows. One of the primary rRNA binding proteins. Required for association of the 30S and 50S subunits to form the 70S ribosome, for tRNA binding and peptide bond formation. It has been suggested to have peptidyltransferase activity; this is somewhat controversial. Makes several contacts with the 16S rRNA in the 70S ribosome. This Ureaplasma urealyticum serovar 10 (strain ATCC 33699 / Western) protein is Large ribosomal subunit protein uL2.